The primary structure comprises 136 residues: Protein BUNDLE SHEATH DEFECTIVE 2, chloroplastic (136 aa).

The N-terminal 56 residues, 1 to 56 (MANSLCFFSSPPTFCFQSPSKNPKPSHFFSTNDNTSSLVQKRELLQTSRSQSFEVK), are a transit peptide targeting the chloroplast. The CR-type zinc finger occupies 62-133 (PQGTKPNSLV…AGFIGGFLST (72 aa)). Residues cysteine 72, cysteine 75, glutamate 78, cysteine 80, cysteine 83, cysteine 86, cysteine 107, cysteine 110, glutamate 115, cysteine 118, and cysteine 121 each coordinate Zn(2+).

This sequence belongs to the BSD2 chaperone family. As to quaternary structure, interacts with the RuBisCo large subunit (RbcL) assembled as an intermediate complex made of eight RbcL and eight BSD2 subunits.

The protein resides in the plastid. The protein localises to the chloroplast stroma. In terms of biological role, chloroplast chaperone required for RuBisCo biogenesis and translational regulation of the RuBisCo large subunit (RbcL). Stabilizes an end-state assembly intermediate of eight RbcL subunits until the small subunits (RBCSs) become available to produce a complete stable RuBisCo complex containing eight small and eight large subunits. This Arabidopsis thaliana (Mouse-ear cress) protein is Protein BUNDLE SHEATH DEFECTIVE 2, chloroplastic.